Reading from the N-terminus, the 332-residue chain is MLSSTTLLAILSALALTSVQAAPADKNSLDYLANKAGKRYLGTAVQSPQLVPGSQYVQILESQFDAITPENEMKWEVVEPTEGNFDFTGTDKIVAEAKKTGSLLRGHNICWDSQLRYAHEVAPKMKLCINDYNIETVNAKSQAMAKVAAGLLAKGAPLHCIGMFKNAKRRSSGLLIRTASSGLESHFIGGSTPKDIPAAMNLFSDQGLEVPMTELDVRIPVNGNDMPANATVAKEQVDDYYTSVSACLGNDLCPGVSIWQFADPTSWIPGVFKGKLIAVSCTFSGCLLQYCVGYGAALLYDAQYQPKSTYYVVQQALKDGKNSGSKFHGIKL.

The first 21 residues, 1 to 21, serve as a signal peptide directing secretion; sequence MLSSTTLLAILSALALTSVQA. The region spanning 26–316 is the GH10 domain; the sequence is KNSLDYLANK…KSTYYVVQQA (291 aa). Glutamate 120 functions as the Proton donor in the catalytic mechanism. A disulfide bridge links cysteine 128 with cysteine 160. Glutamate 214 serves as the catalytic Nucleophile. Cysteine 247 and cysteine 253 are disulfide-bonded.

It belongs to the glycosyl hydrolase 10 (cellulase F) family.

The protein localises to the secreted. The catalysed reaction is Endohydrolysis of (1-&gt;4)-beta-D-xylosidic linkages in xylans.. Its function is as follows. Requires at least three xylose residues for catalytic activity. Does not have activity against xylobiose. The chain is Endo-1,4-beta-xylanase from Naganishia albida (Cryptococcus albidus).